Consider the following 462-residue polypeptide: Serine carboxypeptidase-like 28 (462 aa).

A signal peptide spans 1-26 (MMITKKLYQCMCLLCMVIALLDVVSS). 2 N-linked (GlcNAc...) asparagine glycosylation sites follow: N49 and N144. Cystine bridges form between C93–C342, C254–C266, and C290–C311. S186 is a catalytic residue. N256 carries an N-linked (GlcNAc...) asparagine glycan. N334 carries an N-linked (GlcNAc...) asparagine glycan. Active-site residues include D379 and H434. N454 carries an N-linked (GlcNAc...) asparagine glycan.

The protein belongs to the peptidase S10 family. As to expression, expressed in seedlings, roots and senescent leaves.

The protein localises to the secreted. Probable carboxypeptidase. In Arabidopsis thaliana (Mouse-ear cress), this protein is Serine carboxypeptidase-like 28 (SCPL28).